The primary structure comprises 400 residues: CinA-like protein (400 aa).

It belongs to the CinA family.

The chain is CinA-like protein from Escherichia coli (strain 55989 / EAEC).